We begin with the raw amino-acid sequence, 314 residues long: Glutamyl-Q tRNA(Asp) synthetase (314 aa).

L-glutamate is bound by residues 14 to 18 and E50; that span reads RFAPS. A 'HIGH' region motif is present at residues 17 to 27; sequence PSPTGPLHVGS. Positions 106, 108, 129, and 133 each coordinate Zn(2+). Positions 187 and 205 each coordinate L-glutamate. Residues 243 to 247 carry the 'KMSKS' region motif; it reads KLSKR. An ATP-binding site is contributed by K246.

It belongs to the class-I aminoacyl-tRNA synthetase family. GluQ subfamily. Requires Zn(2+) as cofactor.

Catalyzes the tRNA-independent activation of glutamate in presence of ATP and the subsequent transfer of glutamate onto a tRNA(Asp). Glutamate is transferred on the 2-amino-5-(4,5-dihydroxy-2-cyclopenten-1-yl) moiety of the queuosine in the wobble position of the QUC anticodon. The chain is Glutamyl-Q tRNA(Asp) synthetase from Geobacter sulfurreducens (strain ATCC 51573 / DSM 12127 / PCA).